The primary structure comprises 163 residues: Transcription elongation factor GreA (163 aa).

Positions 45–65 (NAEYHAAREKQAFIEARINEL) form a coiled coil.

Belongs to the GreA/GreB family.

Its function is as follows. Necessary for efficient RNA polymerase transcription elongation past template-encoded arresting sites. The arresting sites in DNA have the property of trapping a certain fraction of elongating RNA polymerases that pass through, resulting in locked ternary complexes. Cleavage of the nascent transcript by cleavage factors such as GreA or GreB allows the resumption of elongation from the new 3'terminus. GreA releases sequences of 2 to 3 nucleotides. The chain is Transcription elongation factor GreA from Helicobacter hepaticus (strain ATCC 51449 / 3B1).